A 391-amino-acid polypeptide reads, in one-letter code: NADH-quinone oxidoreductase subunit D (391 aa).

It belongs to the complex I 49 kDa subunit family. NDH-1 is composed of 14 different subunits. Subunits NuoB, C, D, E, F, and G constitute the peripheral sector of the complex.

Its subcellular location is the cell inner membrane. The enzyme catalyses a quinone + NADH + 5 H(+)(in) = a quinol + NAD(+) + 4 H(+)(out). Its function is as follows. NDH-1 shuttles electrons from NADH, via FMN and iron-sulfur (Fe-S) centers, to quinones in the respiratory chain. The immediate electron acceptor for the enzyme in this species is believed to be ubiquinone. Couples the redox reaction to proton translocation (for every two electrons transferred, four hydrogen ions are translocated across the cytoplasmic membrane), and thus conserves the redox energy in a proton gradient. The sequence is that of NADH-quinone oxidoreductase subunit D from Rickettsia bellii (strain OSU 85-389).